Here is a 127-residue protein sequence, read N- to C-terminus: Thioredoxin-3, mitochondrial (127 aa).

The N-terminal 21 residues, 1–21 (MLFYKPVMRMAVRPLKSIRFQ), are a transit peptide targeting the mitochondrion. The 106-residue stretch at 22-127 (SSYTSITKLT…TALEKGIKDL (106 aa)) folds into the Thioredoxin domain. Active-site nucleophile residues include Cys-55 and Cys-58. A disulfide bridge links Cys-55 with Cys-58.

This sequence belongs to the thioredoxin family.

Its subcellular location is the mitochondrion. The sequence is that of Thioredoxin-3, mitochondrial (TRX3) from Saccharomyces cerevisiae (strain ATCC 204508 / S288c) (Baker's yeast).